A 1171-amino-acid polypeptide reads, in one-letter code: 7,8-linoleate diol synthase (1171 aa).

Residues 1–22 are compositionally biased toward low complexity; that stretch reads MASSSSSGSSTRSSSPSDPPSS. The disordered stretch occupies residues 1–56; the sequence is MASSSSSGSSTRSSSPSDPPSSFFQKLGAFLGLFSKPQPPRPDYPHAPGNSAREEQ. Residues 114–457 are fatty acid alpha-dioxygenase; it reads TDGLITGLWE…DGSFEDEGLI (344 aa). A heme b-binding site is contributed by His-213. Ca(2+) contacts are provided by Asp-214, Ser-229, Tyr-231, Asp-233, and Ser-235. The active site involves Tyr-385. His-388 provides a ligand contact to heme b. The epoxy alcohol synthase stretch occupies residues 675 to 1171; it reads KILNNQKDFK…PMNMKIRWDD (497 aa). Residues 873–900 are disordered; that stretch reads GLANGGANGHANGNANGHTNGNGIHQNG. Low complexity predominate over residues 881–895; it reads GHANGNANGHTNGNG. Cys-1089 is a binding site for heme.

This sequence in the N-terminal section; belongs to the peroxidase family. In the C-terminal section; belongs to the cytochrome P450 family. Homotetramer. The cofactor is heme b. Ca(2+) serves as cofactor. Heme is required as a cofactor.

The enzyme catalyses (9Z,12Z)-octadecadienoate + O2 = (8R,9Z,12Z)-8-hydroperoxyoctadeca-9,12-dienoate. It carries out the reaction (8R,9Z,12Z)-8-hydroperoxyoctadeca-9,12-dienoate = (7S,8S,9Z,12Z)-7,8-dihydroxyoctadeca-9,12-dienoate. Its function is as follows. 7,8-linoleate diol synthase is a bifunctional enzyme that converts linoleic acid (18:2n-6) into 8-hydroperoxy-8(E),12(Z)-octadecadienoic acid (8-HPODE) and then catalyzes the isomerization of the resulting hydroperoxide to 7,8-dihydroxy-9(Z),12(Z)-octadecadienoic acid (7,8-DiHODE). The protein is 7,8-linoleate diol synthase of Pyricularia oryzae (strain 70-15 / ATCC MYA-4617 / FGSC 8958) (Rice blast fungus).